We begin with the raw amino-acid sequence, 150 residues long: Transcriptional regulator MraZ (150 aa).

SpoVT-AbrB domains lie at 8–55 (FINN…GISH) and 84–127 (AVQL…QPQN).

Belongs to the MraZ family. As to quaternary structure, forms oligomers.

The protein localises to the cytoplasm. It localises to the nucleoid. This is Transcriptional regulator MraZ from Rickettsia bellii (strain OSU 85-389).